A 375-amino-acid polypeptide reads, in one-letter code: INO80 complex subunit B (375 aa).

The interval 1-84 (MSACVPTVSS…GPTLQTPAKP (84 aa)) is disordered. Positions 50-68 (HGVHKKKHKKHKKKHKKKH) are enriched in basic residues. 5 positions are modified to phosphoserine: serine 114, serine 116, serine 144, serine 147, and serine 149. Disordered stretches follow at residues 143–165 (DSNLSPSPLRDLPGDLEGQEEEE), 201–220 (LQKARSQPSPTLPLPVGGGC), 262–287 (TAAPSGRGGRGAARGERRGGRAAAPA), and 312–331 (PTAVAQRPAPSGPAPRCSVP). Positions 230-262 (LLKREERARKRRLQAARRAEEHKNQTIERLTKT) form a coiled coil. The HIT-type zinc finger occupies 324-355 (PAPRCSVPGCPHPRRYACSRTGQALCSLQCYR).

In terms of assembly, component of the chromatin remodeling INO80 complex; specifically part of a complex module associated with the helicase ATP-binding and the helicase C-terminal domain of INO80. Interacts with RP9. In terms of tissue distribution, expressed strongly in the testis and moderately in the kidney, skeletal muscle, liver and lung.

It is found in the nucleus. It localises to the nucleolus. Proposed core component of the chromatin remodeling INO80 complex which is involved in transcriptional regulation, DNA replication and probably DNA repair. This Mus musculus (Mouse) protein is INO80 complex subunit B (Ino80b).